The primary structure comprises 491 residues: Glutamyl-tRNA(Gln) amidotransferase subunit A (491 aa).

Residues lysine 79 and serine 158 each act as charge relay system in the active site. The Acyl-ester intermediate role is filled by serine 182.

This sequence belongs to the amidase family. GatA subfamily. As to quaternary structure, heterotrimer of A, B and C subunits.

The catalysed reaction is L-glutamyl-tRNA(Gln) + L-glutamine + ATP + H2O = L-glutaminyl-tRNA(Gln) + L-glutamate + ADP + phosphate + H(+). Allows the formation of correctly charged Gln-tRNA(Gln) through the transamidation of misacylated Glu-tRNA(Gln) in organisms which lack glutaminyl-tRNA synthetase. The reaction takes place in the presence of glutamine and ATP through an activated gamma-phospho-Glu-tRNA(Gln). The protein is Glutamyl-tRNA(Gln) amidotransferase subunit A of Anaplasma phagocytophilum (strain HZ).